The sequence spans 885 residues: Glycerol-3-phosphate acyltransferase (885 aa).

Pro residues predominate over residues 1–17 (MPEQNPLPFPDGQPSPP). A disordered region spans residues 1–26 (MPEQNPLPFPDGQPSPPSTAAADTGA). The short motif at 362 to 367 (HRSHMD) is the HXXXXD motif element.

The protein belongs to the GPAT/DAPAT family.

Its subcellular location is the cell inner membrane. It catalyses the reaction sn-glycerol 3-phosphate + an acyl-CoA = a 1-acyl-sn-glycero-3-phosphate + CoA. Its pathway is phospholipid metabolism; CDP-diacylglycerol biosynthesis; CDP-diacylglycerol from sn-glycerol 3-phosphate: step 1/3. The sequence is that of Glycerol-3-phosphate acyltransferase from Xanthomonas axonopodis pv. citri (strain 306).